The following is a 267-amino-acid chain: MKLALRVAYDGSAFYGFQRQPGVRTVEGEIIKVLQKLGIIESPEKNDFKGASRTDRGVSAFFNVVSFVPSERPDLARPEVLNHHLSDVWVLGIAEVPDDFHPRFWAKFKTYRYYLVNEGFDLSAMRECASLFVGRHDFSAFAKLEPGRDPIREVERVEVIERQGYLVIEVQGKSFLWEMVRRIVNALRFCGLGLLEAEEVERMLSGEYGKKIPPAPPEGLVLWHIEYPGIGFEGDEKGIKKARRDIFERYSRALTRAALFGDFLLEY.

Residue D55 is the Nucleophile of the active site. Y111 is a substrate binding site.

Belongs to the tRNA pseudouridine synthase TruA family.

The catalysed reaction is uridine(38/39/40) in tRNA = pseudouridine(38/39/40) in tRNA. Formation of pseudouridine at positions 38, 39 and 40 in the anticodon stem and loop of transfer RNAs. This Thermococcus kodakarensis (strain ATCC BAA-918 / JCM 12380 / KOD1) (Pyrococcus kodakaraensis (strain KOD1)) protein is tRNA pseudouridine synthase A.